A 275-amino-acid chain; its full sequence is Fructose-2,6-bisphosphatase TIGAR (275 aa).

The active-site Tele-phosphohistidine intermediate is His-11. Glu-89 serves as the catalytic Proton donor/acceptor.

This sequence belongs to the phosphoglycerate mutase family.

The protein resides in the cytoplasm. It localises to the nucleus. The protein localises to the mitochondrion. The catalysed reaction is beta-D-fructose 2,6-bisphosphate + H2O = beta-D-fructose 6-phosphate + phosphate. In terms of biological role, fructose-bisphosphatase hydrolyzing fructose-2,6-bisphosphate as well as fructose-1,6-bisphosphate. Acts as a negative regulator of glycolysis by lowering intracellular levels of fructose-2,6-bisphosphate in a p53/TP53-dependent manner, resulting in the pentose phosphate pathway (PPP) activation and NADPH production. Contributes to the generation of reduced glutathione to cause a decrease in intracellular reactive oxygen species (ROS) content, correlating with its ability to protect cells from oxidative or metabolic stress-induced cell death. May play a role in mitophagy inhibition. This Xenopus tropicalis (Western clawed frog) protein is Fructose-2,6-bisphosphatase TIGAR.